We begin with the raw amino-acid sequence, 104 residues long: Small ribosomal subunit protein uS10 (104 aa).

Belongs to the universal ribosomal protein uS10 family. In terms of assembly, part of the 30S ribosomal subunit.

In terms of biological role, involved in the binding of tRNA to the ribosomes. This chain is Small ribosomal subunit protein uS10, found in Ruegeria pomeroyi (strain ATCC 700808 / DSM 15171 / DSS-3) (Silicibacter pomeroyi).